Consider the following 161-residue polypeptide: MAPTQSQSKATTQWSLTRLAQQVRPHPTLLLLIRSNPMGPHSAWSWLLPLVQSNPMSLRQYATALQSFVLLLGTTGCPRELFLDLYRFIPTLTRTLLTSLGCGPGGAVVLRSGYRSLVLACSLGASLLLSYHQGLIPRPSGTQACCLTLSLMLASLSQFLS.

Belongs to the sapovirus VP3 family.

This is an uncharacterized protein from Sapporo virus (strain Human/United Kingdom/Manchester/1993) (Hu/SV/Man/1993/UK).